The following is a 277-amino-acid chain: MSLEDAFSDGPAFVPYLAAGDPDYESSLEYVEALERGGADVIELGLPFSEPIAEGPTIQNAVVRSLEGGMTPTRFFEFVEDLDVSVPLVCMTYYNLIYRYGDEPGPRPFVEKAAEVGIEGFVVPDLPAEEAGPLREACDEFGLDLVFIVAPTTRGERLDRIMEQVSGYVYVQARLGTTGAQSSVSDQTDSSLERLTDYDVPKAVGFGISDGDHAERIVASGADGIIVGSALVDIVAEGHENGDDAETVADRLETLARELEDGAVAGASQRPPHPERT.

Catalysis depends on proton acceptor residues Glu-43 and Glu-54.

The protein belongs to the TrpA family. As to quaternary structure, tetramer of two alpha and two beta chains.

The enzyme catalyses (1S,2R)-1-C-(indol-3-yl)glycerol 3-phosphate + L-serine = D-glyceraldehyde 3-phosphate + L-tryptophan + H2O. Its pathway is amino-acid biosynthesis; L-tryptophan biosynthesis; L-tryptophan from chorismate: step 5/5. Functionally, the alpha subunit is responsible for the aldol cleavage of indoleglycerol phosphate to indole and glyceraldehyde 3-phosphate. This chain is Tryptophan synthase alpha chain, found in Haloferax volcanii (strain ATCC 29605 / DSM 3757 / JCM 8879 / NBRC 14742 / NCIMB 2012 / VKM B-1768 / DS2) (Halobacterium volcanii).